A 177-amino-acid chain; its full sequence is Large ribosomal subunit protein uL6 (177 aa).

The protein belongs to the universal ribosomal protein uL6 family. Part of the 50S ribosomal subunit.

This protein binds to the 23S rRNA, and is important in its secondary structure. It is located near the subunit interface in the base of the L7/L12 stalk, and near the tRNA binding site of the peptidyltransferase center. This Bartonella bacilliformis (strain ATCC 35685 / KC583 / Herrer 020/F12,63) protein is Large ribosomal subunit protein uL6.